Here is a 141-residue protein sequence, read N- to C-terminus: MSQPLFTATVSAVGGREGKVISSDRVLELDVAMPGTPRAKKLEKATNPEQLFAAGYAACFDSALQLVARTERVKVETEVTANVSLLKDEADQGYKLGVTLQVKGEGVSASELEALVKKAHGVCPYSKATSGNIDVTLEVAE.

This sequence belongs to the OsmC/Ohr family.

Involved in organic hydroperoxide resistance. This chain is Organic hydroperoxide resistance protein OhrA (ohrA), found in Bacillus subtilis (strain 168).